The chain runs to 377 residues: DnaJ-related protein SCJ1 (377 aa).

The first 21 residues, 1-21 (MIPKLYIHLILSLLLLPLILA), serve as a signal peptide directing secretion. One can recognise a J domain in the interval 23–88 (DYYAILEIDK…EKKKIYDQFG (66 aa)). The CR-type zinc finger occupies 156-237 (GSSIEFTLNL…CHGKKVTKKN (82 aa)). CXXCXGXG motif repeat units follow at residues 169–176 (CDACHGSG), 185–192 (CPDCQGRG), 211–218 (CGRCGGTG), and 225–232 (CKTCHGKK). Residues 288–290 (RGD) carry the Cell attachment site motif. A Prevents secretion from ER motif is present at residues 374–377 (KDEL).

It localises to the endoplasmic reticulum lumen. Regulates protein folding in the endoplasmic reticulum lumen. Probably acts as a J-protein for the Hsp70-type chaperone KAR2 by stimulating its ATP-dependent reaction cycle and initiating folding reactions. Also involved in the endoplasmic reticulum-associated degradation (ERAD) process. Cooperates with KAR2 and another J-protein JEM1 to facilitate the export of ERAD substrates to the cytoplasm by maintaining them in a translocation-competent state and preventing their aggregation in the endoplasmic reticulum lumen. This is DnaJ-related protein SCJ1 (SCJ1) from Saccharomyces cerevisiae (strain ATCC 204508 / S288c) (Baker's yeast).